Consider the following 130-residue polypeptide: UPF0102 protein BT_1882 (130 aa).

It belongs to the UPF0102 family.

The protein is UPF0102 protein BT_1882 of Bartonella tribocorum (strain CIP 105476 / IBS 506).